Here is a 260-residue protein sequence, read N- to C-terminus: Ribose-5-phosphate isomerase A (260 aa).

Residues 33–36 (TGST), 89–92 (DGAD), and 102–105 (KGGG) contribute to the substrate site. E111 acts as the Proton acceptor in catalysis. K129 contacts substrate.

This sequence belongs to the ribose 5-phosphate isomerase family. As to quaternary structure, homodimer.

The catalysed reaction is aldehydo-D-ribose 5-phosphate = D-ribulose 5-phosphate. Its pathway is carbohydrate degradation; pentose phosphate pathway; D-ribose 5-phosphate from D-ribulose 5-phosphate (non-oxidative stage): step 1/1. Its function is as follows. Catalyzes the reversible conversion of ribose-5-phosphate to ribulose 5-phosphate. The polypeptide is Ribose-5-phosphate isomerase A (Dinoroseobacter shibae (strain DSM 16493 / NCIMB 14021 / DFL 12)).